The following is a 222-amino-acid chain: Non-structural protein V (222 aa).

Residues 61-107 (ESTNHQKGSVGGGAKPKKPRPKIAIVPADDKTVPGKPIPNPLLGLDS) are disordered. Zn(2+)-binding residues include histidine 171, cysteine 190, cysteine 194, cysteine 206, cysteine 208, cysteine 211, cysteine 215, and cysteine 218.

This sequence belongs to the paramyxoviruses V protein family. Interacts with host DDB1, STAT2 and IFIH1/MDA5. Interacts with host RIGI regulatory protein (via CARDs domain) and host TRIM25 (via SPRY domain); these interactions prevent TRIM25-mediated ubiquitination of RIG-I and disrupts downstream RIG-I signaling.

It localises to the host cytoplasm. Its function is as follows. Plays an essential role in the inhibition of host immune response. Prevents the establishment of cellular antiviral state by blocking interferon-alpha/beta (IFN-alpha/beta) production and signaling pathway. Interacts with host IFIH1/MDA5 and DHX58/LGP2 to inhibit the transduction pathway involved in the activation of IFN-beta promoter, thus protecting the virus against cell antiviral state. Efficiently blocks type I IFN signaling following infection by behaving as a substrate receptor for CUL4-DDB1 E3 ligase complex and targeting host STAT1 for proteasomal degradation. Blocks the type I interferon signaling pathway by disrupting the RIG-I signaling pathway. The polypeptide is Non-structural protein V (P/V) (Parainfluenza virus 5 (strain W3) (PIV5)).